The following is a 450-amino-acid chain: MEKKMQNTIAAIATAYGVSSISIIRVSGNAALDIAKKISHLEEVKPRHAHLTSLYNSQNDLIDQAIMIYFKAPFSFTGEEIVEFQCHGGMIVAQEILDTILSYGIRLAEPGEFSKRAFFNGKIDLTEAEAISKLIEAKSVDAAKILAKQMKGELKYFVDESRDALLRSLAYSEVMIDYAEEDIPDDIMRSIVTQLDGLSEQIMKIVDASYRRRGLIEGFKVAIIGKPNVGKSSLLNALLSYDRAIVSDIAGTTRDTIEEQVRIGSHIIRLVDTAGIRESEDTIEKIGIERSLSSVEDADIIIALFDGSREFDSEDEKILAIVDALQDKHIIVAINKSDLEMKLDGDRINSYDPIEVSAKKGFVKLTRQMEALLDSIGEGEELMLISARQIEAVNRAKNAIAEAKEPLMNGELEFFSYHLQEAVKAISSISKPYDSEEILDKMFGEFCLGK.

The (6S)-5-formyl-5,6,7,8-tetrahydrofolate site is built by Arg-25, Glu-83, and Lys-122. Residues 218-377 (GFKVAIIGKP…QMEALLDSIG (160 aa)) enclose the TrmE-type G domain. Asn-228 lines the K(+) pocket. GTP is bound by residues 228–233 (NVGKSS), 247–253 (SDIAGTT), and 272–275 (DTAG). Residue Ser-232 coordinates Mg(2+). K(+) is bound by residues Ser-247, Ile-249, and Thr-252. Position 253 (Thr-253) interacts with Mg(2+). Lys-450 lines the (6S)-5-formyl-5,6,7,8-tetrahydrofolate pocket.

This sequence belongs to the TRAFAC class TrmE-Era-EngA-EngB-Septin-like GTPase superfamily. TrmE GTPase family. Homodimer. Heterotetramer of two MnmE and two MnmG subunits. The cofactor is K(+).

It is found in the cytoplasm. Its function is as follows. Exhibits a very high intrinsic GTPase hydrolysis rate. Involved in the addition of a carboxymethylaminomethyl (cmnm) group at the wobble position (U34) of certain tRNAs, forming tRNA-cmnm(5)s(2)U34. This chain is tRNA modification GTPase MnmE, found in Sulfurovum sp. (strain NBC37-1).